A 283-amino-acid polypeptide reads, in one-letter code: ATP phosphoribosyltransferase (283 aa).

It belongs to the ATP phosphoribosyltransferase family. Long subfamily. Mg(2+) is required as a cofactor.

The protein resides in the cytoplasm. The catalysed reaction is 1-(5-phospho-beta-D-ribosyl)-ATP + diphosphate = 5-phospho-alpha-D-ribose 1-diphosphate + ATP. Its pathway is amino-acid biosynthesis; L-histidine biosynthesis; L-histidine from 5-phospho-alpha-D-ribose 1-diphosphate: step 1/9. Feedback inhibited by histidine. In terms of biological role, catalyzes the condensation of ATP and 5-phosphoribose 1-diphosphate to form N'-(5'-phosphoribosyl)-ATP (PR-ATP). Has a crucial role in the pathway because the rate of histidine biosynthesis seems to be controlled primarily by regulation of HisG enzymatic activity. The polypeptide is ATP phosphoribosyltransferase (Salinibacter ruber (strain DSM 13855 / M31)).